The chain runs to 571 residues: Protein PNS1 (571 aa).

The disordered stretch occupies residues 1-96; sequence MNDEEKHLAA…PDFPPDYNYK (96 aa). Topologically, residues 1–118 are cytoplasmic; the sequence is MNDEEKHLAA…AVPKPKWNDK (118 aa). Over residues 15-31 the composition is skewed to polar residues; sequence YQPNMHYQQQQEKQTGY. Composition is skewed to low complexity over residues 39–52 and 71–80; these read QGGY…DYYN and GNPNDNYNNQ. Positions 81–90 are enriched in pro residues; sequence QPPPYTPDFP. A helical transmembrane segment spans residues 119–139; the sequence is IGLVILALIFSGYLALSIIVI. At 140 to 166 the chain is on the extracellular side; the sequence is RAYAQTHSFQGWGIYSGENDYSLNTHT. A helical transmembrane segment spans residues 167–187; that stretch reads LILYAFVLATAMVLSLLYFIA. The Cytoplasmic segment spans residues 188–189; the sequence is AR. A helical membrane pass occupies residues 190-210; that stretch reads VWTKQFIWITYILHLLFSWGT. A topological domain (extracellular) is located at residue alanine 211. The helical transmembrane segment at 212 to 232 threads the bilayer; sequence IYYLVVGYYSAGIVFIVFAAL. Residues 233 to 263 are Cytoplasmic-facing; the sequence is TTWWFWCSRKRIPFATIVLQTLIDVTRANPS. Residues 264 to 284 traverse the membrane as a helical segment; the sequence is VLVISAVGTVVGACFGTWFSF. At 285–311 the chain is on the extracellular side; the sequence is TIVSIYVKYDPDNRNPGCMTTGGSCSN. The chain crosses the membrane as a helical span at residues 312 to 332; the sequence is GKLIGLILFAIFCGYYLTEVI. The Cytoplasmic portion of the chain corresponds to 333-369; it reads KNVIHVTISGVYGSWYYCSKSDQGMPKHAAMSSFRRA. A helical transmembrane segment spans residues 370–390; it reads VTYSLGSISLGSLIVSIINFI. Residues 391-406 lie on the Extracellular side of the membrane; that stretch reads RQILSVLQQDARQSGD. A helical transmembrane segment spans residues 407-427; it reads TLATVLLCFVQCCFGVLDWLV. At 428-472 the chain is on the cytoplasmic side; that stretch reads TYFNHYAYSYIALYGKAYVPSAKATWKLMQTRGIDAMVNDSLIGS. A helical membrane pass occupies residues 473 to 493; that stretch reads VLSFGASFVAYAAALVAYCFL. Residues 494–503 are Extracellular-facing; sequence KYTDPSYNSG. The helical transmembrane segment at 504–524 threads the bilayer; that stretch reads GGFYAPVVGLAFVIALQVSNI. Residues 525–571 are Cytoplasmic-facing; it reads TNVSLKSGCSTFFLALARDPEVLRVSYPQIYEEICRTYPPARDKLDI.

This sequence belongs to the CTL (choline transporter-like) family.

Its subcellular location is the cell membrane. Probably involved in transport through the plasma membrane. The polypeptide is Protein PNS1 (PNS1) (Yarrowia lipolytica (strain CLIB 122 / E 150) (Yeast)).